A 267-amino-acid chain; its full sequence is Putative ABC transporter permease protein MJ0413 (267 aa).

Helical transmembrane passes span 18–38 (VLKI…AIYI), 48–68 (EAVI…GSLI), 78–98 (VISG…LMGY), 115–135 (PIPP…GEMS), 136–156 (MIFI…ISGV), 188–208 (PSIL…VVAA), and 228–248 (LSRM…GLVL). The ABC transmembrane type-1 domain occupies 71–252 (TIISIKRVIS…LIGLVLDRGL (182 aa)).

It belongs to the binding-protein-dependent transport system permease family. CysTW subfamily.

It is found in the cell membrane. Functionally, probably part of a binding-protein-dependent transport system. Probably responsible for the translocation of the substrate across the membrane. This chain is Putative ABC transporter permease protein MJ0413, found in Methanocaldococcus jannaschii (strain ATCC 43067 / DSM 2661 / JAL-1 / JCM 10045 / NBRC 100440) (Methanococcus jannaschii).